A 736-amino-acid polypeptide reads, in one-letter code: Fidgetin (736 aa).

Disordered stretches follow at residues 118–155 (GMTPALPPPDVTASVGSSTGVASSLSEPSYSSSNCGNH), 180–248 (TYSG…YSPG), 272–295 (IPGYSYQSHNHAPIAPTPLNGSSA), and 341–438 (STRG…AEEQ). Residues 128 to 150 (VTASVGSSTGVASSLSEPSYSSS) show a composition bias toward low complexity. The segment covering 205–214 (QPPPPPPPTL) has biased composition (pro residues). The segment covering 216–232 (PSYNTSSPNLSSYNYPP) has biased composition (low complexity). Residues 352–368 (DTSSLAFKPTKQSMPTD) show a composition bias toward polar residues. ATP-binding positions include alanine 467 and 507 to 512 (GTGRTL).

It belongs to the AAA ATPase family.

The protein resides in the nucleus matrix. The protein localises to the cytoplasm. Its subcellular location is the cytoskeleton. It localises to the microtubule organizing center. It is found in the centrosome. In terms of biological role, ATP-dependent microtubule severing protein. Severs microtubules along their length and depolymerizes their ends, primarily the minus-end, suppressing microtubule growth from and attachment to centrosomes. Microtubule severing may promote rapid reorganization of cellular microtubule arrays and the release of microtubules from the centrosome following nucleation. Microtubule release from the mitotic spindle poles may allow depolymerization of the microtubule end proximal to the spindle pole, leading to poleward microtubule flux and poleward motion of chromosome. In Danio rerio (Zebrafish), this protein is Fidgetin (fign).